The primary structure comprises 384 residues: 3,7-dimethylxanthine N-methyltransferase 2 (384 aa).

8 residues coordinate S-adenosyl-L-homocysteine: Tyr-18, Cys-61, Asn-66, Asp-100, Leu-101, Ser-139, Phe-140, and Cys-156. Position 157 (Tyr-157) interacts with theobromine. Position 158 (Cys-158) interacts with S-adenosyl-L-homocysteine. His-160 and Trp-161 together coordinate theobromine. Residue Asn-178 coordinates Mg(2+). Ser-237 contributes to the theobromine binding site. Residues Asp-260, Phe-262, and Asn-263 each contribute to the Mg(2+) site. Tyr-368 is a binding site for theobromine.

Belongs to the methyltransferase superfamily. Type-7 methyltransferase family. It depends on Mg(2+) as a cofactor. As to expression, highly expressed in developing endosperm. Detected in young leaves and flower buds. Present in immature fruits (grains), but barely in mature fruits.

The enzyme catalyses 7-methylxanthine + S-adenosyl-L-methionine = theobromine + S-adenosyl-L-homocysteine + H(+). It catalyses the reaction theobromine + S-adenosyl-L-methionine = caffeine + S-adenosyl-L-homocysteine + H(+). It carries out the reaction 1,7-dimethylxanthine + S-adenosyl-L-methionine = caffeine + S-adenosyl-L-homocysteine + H(+). Its pathway is alkaloid biosynthesis. Functionally, involved in the biosynthesis of caffeine. Catalyzes the conversion of 7-methylxanthine (7mX) to theobromine and of theobromine to caffeine. Has 1-N-methylation activity. The sequence is that of 3,7-dimethylxanthine N-methyltransferase 2 from Coffea arabica (Arabian coffee).